The chain runs to 341 residues: Holliday junction branch migration complex subunit RuvB (341 aa).

Positions 1–21 (MSQPDPMLRPEPLESDGEDRA) are disordered. The large ATPase domain (RuvB-L) stretch occupies residues 4 to 183 (PDPMLRPEPL…FGIPTRLQFY (180 aa)). ATP contacts are provided by residues Leu-22, Arg-23, Gly-64, Lys-67, Thr-68, Thr-69, 130-132 (EDF), Arg-173, Tyr-183, and Arg-220. Thr-68 is a Mg(2+) binding site. Residues 184-254 (TIEELDLIVT…IADSALTRLG (71 aa)) are small ATPAse domain (RuvB-S). The interval 257–341 (HLGLDTADRR…PRTQESLFDE (85 aa)) is head domain (RuvB-H). 3 residues coordinate DNA: Arg-293, Arg-312, and Arg-317.

It belongs to the RuvB family. Homohexamer. Forms an RuvA(8)-RuvB(12)-Holliday junction (HJ) complex. HJ DNA is sandwiched between 2 RuvA tetramers; dsDNA enters through RuvA and exits via RuvB. An RuvB hexamer assembles on each DNA strand where it exits the tetramer. Each RuvB hexamer is contacted by two RuvA subunits (via domain III) on 2 adjacent RuvB subunits; this complex drives branch migration. In the full resolvosome a probable DNA-RuvA(4)-RuvB(12)-RuvC(2) complex forms which resolves the HJ.

The protein localises to the cytoplasm. It catalyses the reaction ATP + H2O = ADP + phosphate + H(+). In terms of biological role, the RuvA-RuvB-RuvC complex processes Holliday junction (HJ) DNA during genetic recombination and DNA repair, while the RuvA-RuvB complex plays an important role in the rescue of blocked DNA replication forks via replication fork reversal (RFR). RuvA specifically binds to HJ cruciform DNA, conferring on it an open structure. The RuvB hexamer acts as an ATP-dependent pump, pulling dsDNA into and through the RuvAB complex. RuvB forms 2 homohexamers on either side of HJ DNA bound by 1 or 2 RuvA tetramers; 4 subunits per hexamer contact DNA at a time. Coordinated motions by a converter formed by DNA-disengaged RuvB subunits stimulates ATP hydrolysis and nucleotide exchange. Immobilization of the converter enables RuvB to convert the ATP-contained energy into a lever motion, pulling 2 nucleotides of DNA out of the RuvA tetramer per ATP hydrolyzed, thus driving DNA branch migration. The RuvB motors rotate together with the DNA substrate, which together with the progressing nucleotide cycle form the mechanistic basis for DNA recombination by continuous HJ branch migration. Branch migration allows RuvC to scan DNA until it finds its consensus sequence, where it cleaves and resolves cruciform DNA. This Paracoccus denitrificans (strain Pd 1222) protein is Holliday junction branch migration complex subunit RuvB.